Reading from the N-terminus, the 546-residue chain is CTP synthase (546 aa).

The tract at residues 1–267 (MTKFIFVTGG…AEQVLDILQL (267 aa)) is amidoligase domain. Residue Ser13 participates in CTP binding. Ser13 lines the UTP pocket. ATP is bound at residue 14 to 19 (SIGKGI). Tyr54 contacts L-glutamine. Residue Asp71 coordinates ATP. The Mg(2+) site is built by Asp71 and Glu141. Residues 148–150 (DIE), 188–193 (KTKPTQ), and Lys224 each bind CTP. UTP contacts are provided by residues 188-193 (KTKPTQ) and Lys224. The Glutamine amidotransferase type-1 domain maps to 292 to 534 (EVAIVGKYVR…IKAALGSDLT (243 aa)). An L-glutamine-binding site is contributed by Gly354. The active-site Nucleophile; for glutamine hydrolysis is Cys381. L-glutamine is bound by residues 382 to 385 (LGMQ), Glu405, and Arg462. Active-site residues include His507 and Glu509.

The protein belongs to the CTP synthase family. In terms of assembly, homotetramer.

It carries out the reaction UTP + L-glutamine + ATP + H2O = CTP + L-glutamate + ADP + phosphate + 2 H(+). The catalysed reaction is L-glutamine + H2O = L-glutamate + NH4(+). The enzyme catalyses UTP + NH4(+) + ATP = CTP + ADP + phosphate + 2 H(+). Its pathway is pyrimidine metabolism; CTP biosynthesis via de novo pathway; CTP from UDP: step 2/2. Allosterically activated by GTP, when glutamine is the substrate; GTP has no effect on the reaction when ammonia is the substrate. The allosteric effector GTP functions by stabilizing the protein conformation that binds the tetrahedral intermediate(s) formed during glutamine hydrolysis. Inhibited by the product CTP, via allosteric rather than competitive inhibition. Catalyzes the ATP-dependent amination of UTP to CTP with either L-glutamine or ammonia as the source of nitrogen. Regulates intracellular CTP levels through interactions with the four ribonucleotide triphosphates. This chain is CTP synthase, found in Synechococcus sp. (strain ATCC 27144 / PCC 6301 / SAUG 1402/1) (Anacystis nidulans).